Consider the following 238-residue polypeptide: Ribonuclease 3 (238 aa).

Positions 11–136 (RARLEAAIGY…LIAAIYLDGG (126 aa)) constitute an RNase III domain. Glu49 provides a ligand contact to Mg(2+). The active site involves Asp53. Asp122 and Glu125 together coordinate Mg(2+). The active site involves Glu125. The 70-residue stretch at 161–230 (DAKTELQEWA…AMKLLEREGV (70 aa)) folds into the DRBM domain.

It belongs to the ribonuclease III family. As to quaternary structure, homodimer. It depends on Mg(2+) as a cofactor.

It is found in the cytoplasm. It catalyses the reaction Endonucleolytic cleavage to 5'-phosphomonoester.. Functionally, digests double-stranded RNA. Involved in the processing of primary rRNA transcript to yield the immediate precursors to the large and small rRNAs (23S and 16S). Processes some mRNAs, and tRNAs when they are encoded in the rRNA operon. Processes pre-crRNA and tracrRNA of type II CRISPR loci if present in the organism. The chain is Ribonuclease 3 from Rhizobium meliloti (strain 1021) (Ensifer meliloti).